Reading from the N-terminus, the 248-residue chain is 1-(5-phosphoribosyl)-5-[(5-phosphoribosylamino)methylideneamino] imidazole-4-carboxamide isomerase (248 aa).

The active-site Proton acceptor is Asp-8. Asp-130 acts as the Proton donor in catalysis.

The protein belongs to the HisA/HisF family.

It localises to the cytoplasm. It catalyses the reaction 1-(5-phospho-beta-D-ribosyl)-5-[(5-phospho-beta-D-ribosylamino)methylideneamino]imidazole-4-carboxamide = 5-[(5-phospho-1-deoxy-D-ribulos-1-ylimino)methylamino]-1-(5-phospho-beta-D-ribosyl)imidazole-4-carboxamide. It participates in amino-acid biosynthesis; L-histidine biosynthesis; L-histidine from 5-phospho-alpha-D-ribose 1-diphosphate: step 4/9. In Alkalilimnicola ehrlichii (strain ATCC BAA-1101 / DSM 17681 / MLHE-1), this protein is 1-(5-phosphoribosyl)-5-[(5-phosphoribosylamino)methylideneamino] imidazole-4-carboxamide isomerase.